The primary structure comprises 356 residues: Histidinol-phosphate aminotransferase 2 (356 aa).

Residue lysine 217 is modified to N6-(pyridoxal phosphate)lysine.

The protein belongs to the class-II pyridoxal-phosphate-dependent aminotransferase family. Histidinol-phosphate aminotransferase subfamily. Homodimer. Pyridoxal 5'-phosphate serves as cofactor.

It carries out the reaction L-histidinol phosphate + 2-oxoglutarate = 3-(imidazol-4-yl)-2-oxopropyl phosphate + L-glutamate. It functions in the pathway amino-acid biosynthesis; L-histidine biosynthesis; L-histidine from 5-phospho-alpha-D-ribose 1-diphosphate: step 7/9. This Burkholderia pseudomallei (strain 1710b) protein is Histidinol-phosphate aminotransferase 2.